The following is a 316-amino-acid chain: Glycerol-3-phosphate dehydrogenase [NAD(P)+] (316 aa).

Positions 14, 15, 35, and 109 each coordinate NADPH. Sn-glycerol 3-phosphate-binding residues include lysine 109 and glycine 137. Residue alanine 141 participates in NADPH binding. Residues lysine 192, aspartate 248, serine 258, arginine 259, and asparagine 260 each contribute to the sn-glycerol 3-phosphate site. Lysine 192 serves as the catalytic Proton acceptor. NADPH is bound at residue arginine 259. Leucine 283 and glutamate 285 together coordinate NADPH.

This sequence belongs to the NAD-dependent glycerol-3-phosphate dehydrogenase family.

It localises to the cytoplasm. It catalyses the reaction sn-glycerol 3-phosphate + NAD(+) = dihydroxyacetone phosphate + NADH + H(+). It carries out the reaction sn-glycerol 3-phosphate + NADP(+) = dihydroxyacetone phosphate + NADPH + H(+). The protein operates within membrane lipid metabolism; glycerophospholipid metabolism. Its function is as follows. Catalyzes the reduction of the glycolytic intermediate dihydroxyacetone phosphate (DHAP) to sn-glycerol 3-phosphate (G3P), the key precursor for phospholipid synthesis. This chain is Glycerol-3-phosphate dehydrogenase [NAD(P)+], found in Rickettsia prowazekii (strain Madrid E).